The chain runs to 339 residues: Phospho-N-acetylmuramoyl-pentapeptide-transferase (339 aa).

10 helical membrane-spanning segments follow: residues 4-24 (TTIIAGIISFILTILAMPFFI), 53-73 (MGGTVFLLVAALVTFICAFVL), 80-100 (AFGATLAILFIVLIYGTIGFL), 113-133 (GLTAWQKMALQLIGGLVFYLV), 145-165 (LFGFPLHLGVFYIIFILFWVV), 176-196 (GIDGLASISVVISLLTYSVIA), 202-222 (FDVLLIIISMVGALLGFFVYN), 228-248 (VFMGDVGSLALGAMLAAISIT), 253-273 (WTLLIIGIVYVLETASVMLQV), and 318-338 (VDFFLWSIGLLGSLLILAILY).

It belongs to the glycosyltransferase 4 family. MraY subfamily. Mg(2+) serves as cofactor.

The protein localises to the cell membrane. The enzyme catalyses UDP-N-acetyl-alpha-D-muramoyl-L-alanyl-gamma-D-glutamyl-L-lysyl-D-alanyl-D-alanine + di-trans,octa-cis-undecaprenyl phosphate = Mur2Ac(oyl-L-Ala-gamma-D-Glu-L-Lys-D-Ala-D-Ala)-di-trans,octa-cis-undecaprenyl diphosphate + UMP. The protein operates within cell wall biogenesis; peptidoglycan biosynthesis. In terms of biological role, catalyzes the initial step of the lipid cycle reactions in the biosynthesis of the cell wall peptidoglycan: transfers peptidoglycan precursor phospho-MurNAc-pentapeptide from UDP-MurNAc-pentapeptide onto the lipid carrier undecaprenyl phosphate, yielding undecaprenyl-pyrophosphoryl-MurNAc-pentapeptide, known as lipid I. The chain is Phospho-N-acetylmuramoyl-pentapeptide-transferase from Streptococcus mutans serotype c (strain ATCC 700610 / UA159).